Consider the following 275-residue polypeptide: Envelope glycoprotein (275 aa).

Disulfide bonds link cysteine 1/cysteine 10, cysteine 18/cysteine 27, and cysteine 58/cysteine 62. An N-linked (GlcNAc...) asparagine; by host glycan is attached at asparagine 122. Cystine bridges form between cysteine 164-cysteine 194, cysteine 187-cysteine 239, cysteine 204-cysteine 209, and cysteine 240-cysteine 245.

It belongs to the hantavirus envelope glycoprotein family. As to quaternary structure, homodimer. Homotetramer; forms heterotetrameric Gn-Gc spikes in the pre-fusion conformation. Homotrimer; forms homotrimer in the post-fusion conformation at acidic pH. Interacts (via C-terminus) with the nucleoprotein. In terms of processing, envelope polyprotein precursor is quickly cleaved in vivo just after synthesis, presumably by host signal peptidase.

The protein localises to the virion membrane. It localises to the host cell surface. The protein resides in the host Golgi apparatus membrane. It is found in the host endoplasmic reticulum membrane. In terms of biological role, forms homotetramers with glycoprotein N at the surface of the virion. Attaches the virion to host cell receptors including integrin ITGAV/ITGB3. This attachment induces virion internalization predominantly through clathrin-dependent endocytosis. Class II fusion protein that promotes fusion of viral membrane with host endosomal membrane after endocytosis of the virion. The polypeptide is Envelope glycoprotein (GP) (Homo sapiens (Human)).